A 509-amino-acid polypeptide reads, in one-letter code: Methionine--tRNA ligase (509 aa).

Residues 12–22 carry the 'HIGH' region motif; sequence YYPSGDLHLGH. Positions 302–306 match the 'KMSKS' region motif; it reads KMSKS. Residue Lys-305 participates in ATP binding.

The protein belongs to the class-I aminoacyl-tRNA synthetase family. MetG type 2B subfamily. In terms of assembly, monomer.

The protein resides in the cytoplasm. The enzyme catalyses tRNA(Met) + L-methionine + ATP = L-methionyl-tRNA(Met) + AMP + diphosphate. Its function is as follows. Is required not only for elongation of protein synthesis but also for the initiation of all mRNA translation through initiator tRNA(fMet) aminoacylation. The polypeptide is Methionine--tRNA ligase (metG) (Mycoplasmopsis pulmonis (strain UAB CTIP) (Mycoplasma pulmonis)).